Here is a 515-residue protein sequence, read N- to C-terminus: Maturase K (515 aa).

Belongs to the intron maturase 2 family. MatK subfamily.

The protein localises to the plastid. The protein resides in the chloroplast. Usually encoded in the trnK tRNA gene intron. Probably assists in splicing its own and other chloroplast group II introns. This is Maturase K from Larix laricina (Tamarack).